A 175-amino-acid chain; its full sequence is NADH-ubiquinone oxidoreductase chain 6 (175 aa).

The next 6 helical transmembrane spans lie at 1–21, 24–44, 51–71, 87–107, 113–133, and 148–168; these read MMYI…GFSS, SPVY…GIIM, LGLV…GYTI, VVLS…VWLF, LVGF…GSFG, and YGFW…FIAI.

This sequence belongs to the complex I subunit 6 family. As to quaternary structure, core subunit of respiratory chain NADH dehydrogenase (Complex I) which is composed of 45 different subunits.

The protein localises to the mitochondrion inner membrane. The enzyme catalyses a ubiquinone + NADH + 5 H(+)(in) = a ubiquinol + NAD(+) + 4 H(+)(out). Core subunit of the mitochondrial membrane respiratory chain NADH dehydrogenase (Complex I) which catalyzes electron transfer from NADH through the respiratory chain, using ubiquinone as an electron acceptor. Essential for the catalytic activity and assembly of complex I. This is NADH-ubiquinone oxidoreductase chain 6 (MT-ND6) from Mammuthus primigenius (Siberian woolly mammoth).